The primary structure comprises 256 residues: Small ribosomal subunit protein uS2 (256 aa).

The protein belongs to the universal ribosomal protein uS2 family.

The polypeptide is Small ribosomal subunit protein uS2 (Rhizobium rhizogenes (strain K84 / ATCC BAA-868) (Agrobacterium radiobacter)).